We begin with the raw amino-acid sequence, 816 residues long: Sucrose synthase 1 (816 aa).

A GT-B glycosyltransferase region spans residues 280–757 (MVFNVVIMSP…GLQRIEEKYT (478 aa)).

This sequence belongs to the glycosyltransferase 1 family. Plant sucrose synthase subfamily. Homotetramer or heterotetramer with SUS2. In terms of tissue distribution, expressed in root phloem and leaf mesophyll. Expressed in phloem tissues and aleurone layers of seeds and at lower levels in the pericarp and endosperm cells (at protein level). Predominantly expressed in elongating tissues including roots, developing leaves and internodes.

The enzyme catalyses an NDP-alpha-D-glucose + D-fructose = a ribonucleoside 5'-diphosphate + sucrose + H(+). In terms of biological role, sucrose-cleaving enzyme that provides UDP-glucose and fructose for various metabolic pathways. This chain is Sucrose synthase 1 (SUS1), found in Oryza sativa subsp. japonica (Rice).